Here is a 215-residue protein sequence, read N- to C-terminus: Orotidine 5'-phosphate decarboxylase (215 aa).

Residues D12, K34, 60–69, S117, 170–180, G193, and R194 contribute to the substrate site; these read DFKVADIPNT and PGVGAQGGSAA. The active-site Proton donor is the K62.

It belongs to the OMP decarboxylase family. Type 1 subfamily. Homodimer.

It carries out the reaction orotidine 5'-phosphate + H(+) = UMP + CO2. It functions in the pathway pyrimidine metabolism; UMP biosynthesis via de novo pathway; UMP from orotate: step 2/2. Its function is as follows. Catalyzes the decarboxylation of orotidine 5'-monophosphate (OMP) to uridine 5'-monophosphate (UMP). The sequence is that of Orotidine 5'-phosphate decarboxylase from Methanococcoides burtonii (strain DSM 6242 / NBRC 107633 / OCM 468 / ACE-M).